The sequence spans 273 residues: Cell division protein FtsQ (273 aa).

Over 1 to 20 the chain is Cytoplasmic; it reads MPPRKAHTTRRTPAKKSGVR. A helical membrane pass occupies residues 21-43; the sequence is RRLLRLLVTGVPVLALCGVAWLW. Over 44–273 the chain is Periplasmic; that stretch reads LESVRLTRIE…STQKSAMGHE (230 aa). Residues 47-115 form the POTRA domain; sequence VRLTRIEIVG…GTLRIAVEER (69 aa).

It belongs to the FtsQ/DivIB family. FtsQ subfamily.

Its subcellular location is the cell inner membrane. Essential cell division protein. The polypeptide is Cell division protein FtsQ (Rhodothermus marinus (strain ATCC 43812 / DSM 4252 / R-10) (Rhodothermus obamensis)).